A 419-amino-acid chain; its full sequence is Serine--tRNA ligase (419 aa).

226–228 (TSE) serves as a coordination point for L-serine. Residues 257–259 (RRE) and Val273 each bind ATP. L-serine is bound at residue Glu280. Residue 344–347 (ELTS) participates in ATP binding. Thr379 lines the L-serine pocket.

This sequence belongs to the class-II aminoacyl-tRNA synthetase family. Type-1 seryl-tRNA synthetase subfamily. In terms of assembly, homodimer. The tRNA molecule binds across the dimer.

The protein resides in the cytoplasm. It carries out the reaction tRNA(Ser) + L-serine + ATP = L-seryl-tRNA(Ser) + AMP + diphosphate + H(+). The enzyme catalyses tRNA(Sec) + L-serine + ATP = L-seryl-tRNA(Sec) + AMP + diphosphate + H(+). Its pathway is aminoacyl-tRNA biosynthesis; selenocysteinyl-tRNA(Sec) biosynthesis; L-seryl-tRNA(Sec) from L-serine and tRNA(Sec): step 1/1. Its function is as follows. Catalyzes the attachment of serine to tRNA(Ser). Is also able to aminoacylate tRNA(Sec) with serine, to form the misacylated tRNA L-seryl-tRNA(Sec), which will be further converted into selenocysteinyl-tRNA(Sec). This chain is Serine--tRNA ligase, found in Corynebacterium diphtheriae (strain ATCC 700971 / NCTC 13129 / Biotype gravis).